Here is a 66-residue protein sequence, read N- to C-terminus: Beta-defensin 13 (66 aa).

The first 22 residues, 1-22, serve as a signal peptide directing secretion; that stretch reads MRIFSLIVAGLVLLIQLHPAKG. Cystine bridges form between C30/C59, C37/C51, and C41/C60.

Belongs to the beta-defensin family.

It localises to the secreted. Has antibacterial activity. The chain is Beta-defensin 13 (Defb13) from Rattus norvegicus (Rat).